Consider the following 157-residue polypeptide: Small ribosomal subunit protein bS6 (157 aa).

The span at 96–151 (HEEGPSAMMRKADRDRDRDERGGGGFRGDREGGFRGDREGGGFRGDRGPRRPRDDA) shows a compositional bias: basic and acidic residues. A disordered region spans residues 96-157 (HEEGPSAMMR…RDDAPAATEE (62 aa)).

This sequence belongs to the bacterial ribosomal protein bS6 family.

In terms of biological role, binds together with bS18 to 16S ribosomal RNA. This chain is Small ribosomal subunit protein bS6, found in Rhodopseudomonas palustris (strain BisA53).